Here is a 160-residue protein sequence, read N- to C-terminus: Transmembrane protein 216 (160 aa).

4 helical membrane-spanning segments follow: residues 41 to 61 (WYFA…GVIL), 68 to 88 (LILD…RLFY), 101 to 121 (LFVS…YLLL), and 134 to 154 (AVLL…ISIF).

Part of the tectonic-like complex (also named B9 complex).

The protein resides in the membrane. The protein localises to the cytoplasm. It localises to the cytoskeleton. It is found in the cilium basal body. Functionally, part of the tectonic-like complex which is required for tissue-specific ciliogenesis and may regulate ciliary membrane composition. The protein is Transmembrane protein 216 (tmem216) of Danio rerio (Zebrafish).